A 431-amino-acid chain; its full sequence is 3-phosphoshikimate 1-carboxyvinyltransferase (431 aa).

Residues Lys26, Ser27, and Arg31 each coordinate 3-phosphoshikimate. Residue Lys26 participates in phosphoenolpyruvate binding. Positions 100 and 129 each coordinate phosphoenolpyruvate. Positions 175, 176, 177, 308, and 335 each coordinate 3-phosphoshikimate. Gln177 is a binding site for phosphoenolpyruvate. The active-site Proton acceptor is Asp308. Phosphoenolpyruvate-binding residues include Arg339, Arg381, and Lys412.

Belongs to the EPSP synthase family. Monomer.

The protein resides in the cytoplasm. It catalyses the reaction 3-phosphoshikimate + phosphoenolpyruvate = 5-O-(1-carboxyvinyl)-3-phosphoshikimate + phosphate. It functions in the pathway metabolic intermediate biosynthesis; chorismate biosynthesis; chorismate from D-erythrose 4-phosphate and phosphoenolpyruvate: step 6/7. Its function is as follows. Catalyzes the transfer of the enolpyruvyl moiety of phosphoenolpyruvate (PEP) to the 5-hydroxyl of shikimate-3-phosphate (S3P) to produce enolpyruvyl shikimate-3-phosphate and inorganic phosphate. In Opitutus terrae (strain DSM 11246 / JCM 15787 / PB90-1), this protein is 3-phosphoshikimate 1-carboxyvinyltransferase.